The primary structure comprises 515 residues: Tetratricopeptide repeat protein 8 (515 aa).

The stretch at 4 to 37 (EMEPLLRAWSYFRRRKFQLCADLCTQMLEKSPYD) is one TPR 1 repeat. 2 disordered regions span residues 89–109 (RPGT…TQAV) and 118–137 (PITG…TMEQ). TPR repeat units lie at residues 225–258 (WWWK…QEMV), 259–291 (DTFL…FPGE), 292–325 (VTLL…DNTH), 326–359 (VEAI…GVYN), 360–393 (CQLF…AENE), 397–430 (ADVW…NNHH), and 432–464 (EAYN…APHM).

Part of BBSome complex, that contains BBS1, BBS2, BBS4, BBS5, BBS7, BBS8/TTC8, BBS9 and BBIP10. Interacts with PCM1. Interacts with CCDC28B. Interacts with PKD1. Isoform 1 is retina-specific whereas isoform 2 is ubiquitously expressed.

The protein localises to the cytoplasm. It is found in the cytoskeleton. Its subcellular location is the microtubule organizing center. The protein resides in the centrosome. It localises to the centriole. The protein localises to the cell projection. It is found in the cilium membrane. Its subcellular location is the centriolar satellite. The protein resides in the cilium. Its function is as follows. The BBSome complex is thought to function as a coat complex required for sorting of specific membrane proteins to the primary cilia. The BBSome complex is required for ciliogenesis but is dispensable for centriolar satellite function. This ciliogenic function is mediated in part by the Rab8 GDP/GTP exchange factor, which localizes to the basal body and contacts the BBSome. Rab8(GTP) enters the primary cilium and promotes extension of the ciliary membrane. Firstly the BBSome associates with the ciliary membrane and binds to RAB3IP/Rabin8, the guanosyl exchange factor (GEF) for Rab8 and then the Rab8-GTP localizes to the cilium and promotes docking and fusion of carrier vesicles to the base of the ciliary membrane. The BBSome complex, together with the LTZL1, controls SMO ciliary trafficking and contributes to the sonic hedgehog (SHH) pathway regulation. Required for proper BBSome complex assembly and its ciliary localization. The protein is Tetratricopeptide repeat protein 8 (Ttc8) of Mus musculus (Mouse).